A 240-amino-acid polypeptide reads, in one-letter code: UDP-2,3-diacylglucosamine hydrolase (240 aa).

Mn(2+) contacts are provided by aspartate 8, histidine 10, aspartate 41, asparagine 79, and histidine 114. 79–80 (NR) contributes to the substrate binding site. Residues aspartate 122, serine 160, asparagine 164, lysine 167, and histidine 195 each coordinate substrate. Residues histidine 195 and histidine 197 each contribute to the Mn(2+) site.

The protein belongs to the LpxH family. It depends on Mn(2+) as a cofactor.

It localises to the cell inner membrane. The catalysed reaction is UDP-2-N,3-O-bis[(3R)-3-hydroxytetradecanoyl]-alpha-D-glucosamine + H2O = 2-N,3-O-bis[(3R)-3-hydroxytetradecanoyl]-alpha-D-glucosaminyl 1-phosphate + UMP + 2 H(+). Its pathway is glycolipid biosynthesis; lipid IV(A) biosynthesis; lipid IV(A) from (3R)-3-hydroxytetradecanoyl-[acyl-carrier-protein] and UDP-N-acetyl-alpha-D-glucosamine: step 4/6. In terms of biological role, hydrolyzes the pyrophosphate bond of UDP-2,3-diacylglucosamine to yield 2,3-diacylglucosamine 1-phosphate (lipid X) and UMP by catalyzing the attack of water at the alpha-P atom. Involved in the biosynthesis of lipid A, a phosphorylated glycolipid that anchors the lipopolysaccharide to the outer membrane of the cell. The chain is UDP-2,3-diacylglucosamine hydrolase from Escherichia coli O17:K52:H18 (strain UMN026 / ExPEC).